The chain runs to 182 residues: Crossover junction endodeoxyribonuclease RuvC (182 aa).

Residues D7, E69, and D141 contribute to the active site. Mg(2+) contacts are provided by D7, E69, and D141.

Belongs to the RuvC family. As to quaternary structure, homodimer which binds Holliday junction (HJ) DNA. The HJ becomes 2-fold symmetrical on binding to RuvC with unstacked arms; it has a different conformation from HJ DNA in complex with RuvA. In the full resolvosome a probable DNA-RuvA(4)-RuvB(12)-RuvC(2) complex forms which resolves the HJ. The cofactor is Mg(2+).

Its subcellular location is the cytoplasm. The enzyme catalyses Endonucleolytic cleavage at a junction such as a reciprocal single-stranded crossover between two homologous DNA duplexes (Holliday junction).. Functionally, the RuvA-RuvB-RuvC complex processes Holliday junction (HJ) DNA during genetic recombination and DNA repair. Endonuclease that resolves HJ intermediates. Cleaves cruciform DNA by making single-stranded nicks across the HJ at symmetrical positions within the homologous arms, yielding a 5'-phosphate and a 3'-hydroxyl group; requires a central core of homology in the junction. The consensus cleavage sequence is 5'-(A/T)TT(C/G)-3'. Cleavage occurs on the 3'-side of the TT dinucleotide at the point of strand exchange. HJ branch migration catalyzed by RuvA-RuvB allows RuvC to scan DNA until it finds its consensus sequence, where it cleaves and resolves the cruciform DNA. The polypeptide is Crossover junction endodeoxyribonuclease RuvC (Albidiferax ferrireducens (strain ATCC BAA-621 / DSM 15236 / T118) (Rhodoferax ferrireducens)).